The primary structure comprises 120 residues: Protein GP96 (120 aa).

It belongs to the herpesviridae UL96 family.

This chain is Protein GP96, found in Cavia porcellus (Guinea pig).